The primary structure comprises 533 residues: Protein transport protein SEC9 (533 aa).

Disordered stretches follow at residues methionine 1–lysine 32, arginine 68–threonine 184, methionine 200–proline 246, and proline 259–proline 284. A compositionally biased stretch (basic and acidic residues) spans proline 11 to leucine 24. Residues glycine 92–glutamine 102 show a composition bias toward polar residues. Gly residues predominate over residues glycine 157–threonine 172. Residues arginine 227 to alanine 240 show a composition bias toward low complexity. T-SNARE coiled-coil homology domains follow at residues arginine 318–leucine 380 and aspartate 470–isoleucine 532.

The protein belongs to the SNAP-25 family.

This Eremothecium gossypii (strain ATCC 10895 / CBS 109.51 / FGSC 9923 / NRRL Y-1056) (Yeast) protein is Protein transport protein SEC9 (SEC9).